Reading from the N-terminus, the 175-residue chain is NADH-ubiquinone oxidoreductase chain 6 (175 aa).

A run of 5 helical transmembrane segments spans residues 1–21, 25–45, 47–67, 88–108, and 149–169; these read MMTY…VGFS, SPIY…GIIM, FGGS…MLVV, TVMG…LYVL, and YGAW…LVIL.

Belongs to the complex I subunit 6 family. In terms of assembly, core subunit of respiratory chain NADH dehydrogenase (Complex I) which is composed of 45 different subunits.

It localises to the mitochondrion inner membrane. It catalyses the reaction a ubiquinone + NADH + 5 H(+)(in) = a ubiquinol + NAD(+) + 4 H(+)(out). In terms of biological role, core subunit of the mitochondrial membrane respiratory chain NADH dehydrogenase (Complex I) which catalyzes electron transfer from NADH through the respiratory chain, using ubiquinone as an electron acceptor. Essential for the catalytic activity and assembly of complex I. This chain is NADH-ubiquinone oxidoreductase chain 6 (MT-ND6), found in Equus asinus (Donkey).